The following is a 193-amino-acid chain: Probable nicotinate-nucleotide adenylyltransferase (193 aa).

It belongs to the NadD family.

The enzyme catalyses nicotinate beta-D-ribonucleotide + ATP + H(+) = deamido-NAD(+) + diphosphate. The protein operates within cofactor biosynthesis; NAD(+) biosynthesis; deamido-NAD(+) from nicotinate D-ribonucleotide: step 1/1. Catalyzes the reversible adenylation of nicotinate mononucleotide (NaMN) to nicotinic acid adenine dinucleotide (NaAD). The chain is Probable nicotinate-nucleotide adenylyltransferase from Endomicrobium trichonymphae.